The primary structure comprises 593 residues: Probable E3 ubiquitin-protein ligase ARI2 (593 aa).

Residues Ser-120–Gln-334 are TRIAD supradomain. The Zn(2+) site is built by Cys-124, Cys-127, Cys-141, His-143, Cys-146, Cys-149, Cys-168, Cys-173, Cys-215, Cys-221, Cys-237, Cys-239, Cys-244, Cys-247, His-252, Cys-257, Cys-284, and Cys-287. Residues Cys-124–Cys-173 form an RING-type 1 zinc finger. The IBR-type zinc finger occupies Glu-195–Cys-257. An RING-type 2; atypical zinc finger spans residues Cys-284–Cys-312. Cys-297 is an active-site residue. Residues Cys-302, Cys-304, Cys-309, Cys-312, His-320, and Cys-330 each coordinate Zn(2+).

It belongs to the RBR family. Ariadne subfamily. Zn(2+) is required as a cofactor. Ubiquitous.

The catalysed reaction is [E2 ubiquitin-conjugating enzyme]-S-ubiquitinyl-L-cysteine + [acceptor protein]-L-lysine = [E2 ubiquitin-conjugating enzyme]-L-cysteine + [acceptor protein]-N(6)-ubiquitinyl-L-lysine.. It functions in the pathway protein modification; protein ubiquitination. Its function is as follows. Might act as an E3 ubiquitin-protein ligase, or as part of E3 complex, which accepts ubiquitin from specific E2 ubiquitin-conjugating enzymes and then transfers it to substrates. The sequence is that of Probable E3 ubiquitin-protein ligase ARI2 (ARI2) from Arabidopsis thaliana (Mouse-ear cress).